The primary structure comprises 153 residues: MKTLILHICIFALVAFASASRDSAKKIGSQYDNYETCLTELSVTEDELFSIGEVTSGQHKTNHEDTELHKNGCVMQCMLEKDGLMTGADYDEEKMREDYIKETGAQPGDQRVEALNACMQETKDLEDKCDKSLILVACVLAAEAVLADSSEGA.

A signal peptide spans 1-19; sequence MKTLILHICIFALVAFASA. 3 cysteine pairs are disulfide-bonded: Cys37–Cys77, Cys73–Cys129, and Cys118–Cys138.

Belongs to the PBP/GOBP family. In terms of assembly, homodimer.

It localises to the secreted. Functionally, colony queen number, a major feature of social organization, is associated with worker genotype for Gp-9. Colonies are headed by either a single reproductive queen (monogyne form) or multiple queens (polygyne form). Differences in worker Gp-9 genotypes between social forms may cause differences in workers' abilities to recognize queens and regulate their numbers. This chain is Pheromone-binding protein Gp-9, found in Solenopsis nigella gensterblumi (Fire ant).